We begin with the raw amino-acid sequence, 87 residues long: Omega-lycotoxin-Am1g (87 aa).

A signal peptide spans 1–17 (MKLSIFFVLFFIAIAYC). A propeptide spanning residues 18–40 (QPEFLDDEEDEVEETLPVAEEGR) is cleaved from the precursor. 4 disulfides stabilise this stretch: cysteine 44/cysteine 59, cysteine 51/cysteine 64, cysteine 58/cysteine 84, and cysteine 66/cysteine 82.

The protein belongs to the neurotoxin omega-lctx family. Expressed by the venom gland.

The protein resides in the secreted. Modulates Cav2.1/CACNA1A voltage-gated calcium channels (P/Q-type currents) in rat cerebellar Purkinje cells and hippocampal CA1-CA3 neurons. At saturating concentrations (&gt;10 nM) decelerates activation kinetics and slightly increases peak amplitude without affecting deactivation kinetics. In vivo, does not cause death when intravenously injected into mice. In rat models, through its activity on Cav2.1/CACNA1A, has an ameliorative effect on memory defects provoked by hyperstimulation of N-methyl-D-aspartate receptors (NMDARs) in the hippocampus. The protein is Omega-lycotoxin-Am1g of Alopecosa marikovskyi (Wolf spider).